A 293-amino-acid polypeptide reads, in one-letter code: Ribosomal protein L11 methyltransferase (293 aa).

Residues T145, G166, D188, and N230 each coordinate S-adenosyl-L-methionine.

This sequence belongs to the methyltransferase superfamily. PrmA family.

It localises to the cytoplasm. It carries out the reaction L-lysyl-[protein] + 3 S-adenosyl-L-methionine = N(6),N(6),N(6)-trimethyl-L-lysyl-[protein] + 3 S-adenosyl-L-homocysteine + 3 H(+). Methylates ribosomal protein L11. The sequence is that of Ribosomal protein L11 methyltransferase from Shewanella pealeana (strain ATCC 700345 / ANG-SQ1).